A 304-amino-acid chain; its full sequence is Protoheme IX farnesyltransferase (304 aa).

A run of 9 helical transmembrane segments spans residues 31-51 (VNTL…PDGL), 58-78 (VAAT…NCLI), 99-119 (LAPA…LTVL), 126-146 (LTMW…TVLL), 154-174 (IVIG…AVTG), 180-200 (ALLL…ALAL), 222-242 (FTRL…LLPF), 243-263 (ATRM…IGFL), and 284-304 (FSIL…YLPL).

Belongs to the UbiA prenyltransferase family. Protoheme IX farnesyltransferase subfamily.

The protein resides in the cell inner membrane. The enzyme catalyses heme b + (2E,6E)-farnesyl diphosphate + H2O = Fe(II)-heme o + diphosphate. Its pathway is porphyrin-containing compound metabolism; heme O biosynthesis; heme O from protoheme: step 1/1. Functionally, converts heme B (protoheme IX) to heme O by substitution of the vinyl group on carbon 2 of heme B porphyrin ring with a hydroxyethyl farnesyl side group. The sequence is that of Protoheme IX farnesyltransferase from Aromatoleum aromaticum (strain DSM 19018 / LMG 30748 / EbN1) (Azoarcus sp. (strain EbN1)).